Reading from the N-terminus, the 452-residue chain is NADH-cytochrome b5 reductase-like protein alnC (452 aa).

Residues 4-80 enclose the Cytochrome b5 heme-binding domain; it reads PASITLAEVA…LKTLLVGSLQ (77 aa). An FMN-binding site is contributed by 33–38; that stretch reads AEYRED. Residues His39 and His63 each contribute to the heme site. Residues 80–83 and 116–125 each bind FMN; these read QSKT and NDTSKYGQLP. The next 2 helical transmembrane spans lie at 120-140 and 166-186; these read KYGQ…FFTL and VGFL…ATFV. The 100-residue stretch at 225–324 folds into the FAD-binding FR-type domain; that stretch reads NTQQFLTLVD…RGPFGRYSPS (100 aa). 302 to 305 contributes to the FAD binding site; sequence YLLN. Residues 389 to 390 and 395 to 399 each bind NADP(+); these read GQ and WKGLR.

Belongs to the flavoprotein pyridine nucleotide cytochrome reductase family. The cofactor is FAD. It depends on FMN as a cofactor.

It localises to the membrane. It participates in polyketide biosynthesis. In terms of biological role, NADH-cytochrome b5 reductase-like protein; part of the gene cluster that mediates the biosynthesis of asperlin, a polyketide showing anti-inflammatory, antitumor and antibiotic activities. The first step of the asperlin biosynthesis is the production of the intermediate 2,4,6-octatrienoic acid by the highly redusing polyketide synthase alnA with cleavage of the PKS product by the esterase alnB. 2,4,6-octatrienoic acid is further converted to asperlin via several steps involving the remaining enzymes from the cluster. The chain is NADH-cytochrome b5 reductase-like protein alnC from Emericella nidulans (strain FGSC A4 / ATCC 38163 / CBS 112.46 / NRRL 194 / M139) (Aspergillus nidulans).